The sequence spans 586 residues: MFS-type transporter ucsD (586 aa).

The segment at 1-56 (MSRNSGTTLEDGPLHADPTTEAPNNATVTTNVTANDENTEKEVDADAAAAAPAEAP) is disordered. Low complexity-rich tracts occupy residues 19–36 (TTEAPNNATVTTNVTAND) and 46–56 (DAAAAAPAEAP). Residues Asn-25 and Asn-31 are each glycosylated (N-linked (GlcNAc...) asparagine). Helical transmembrane passes span 65 to 85 (WAIVAALAFTALLSSLEGTII), 101 to 121 (SFIWVPNGYFLATIVMLPLMA), 131 to 151 (WLTLISVATFTLGSGICGGAN), 164 to 184 (GFGGGGIALMINIILTDLVPL), 192 to 212 (GIVQMVSAVGAALGPFLGGLL), 220 to 240 (WVFYINLPIGGTSLVALFFFL), 263 to 283 (AIFIASTVSVLIGVTWGGAVY), and 290 to 310 (VIVPLVLGFFGLGLFVVYEWT). The N-linked (GlcNAc...) asparagine glycan is linked to Asn-324. A run of 6 helical transmembrane segments spans residues 330-350 (VLGVTFLHTVATYWSFYFMPI), 368-388 (LPLFAGIFPFAILGGMLLAKF), 393-413 (PMHLIGMAIITLSFGLFSLLD), 420-440 (AWACFQLLFAVGAGLMIAILL), 458-478 (VWTFVRGFGTVWGVTIPSAIF), and 532-552 (LRTVWYVGVALAGFGWLLIWL).

This sequence belongs to the major facilitator superfamily.

It is found in the membrane. In terms of biological role, MFS-type transporter; part of the gene cluster that mediates the biosynthesis of UCS1025A, a member of the pyrrolizidinone family that acts as a strong telomerase inhibitor and displays potent antibacterial and antitumor properties. These compounds share a hemiaminal-containing pyrrolizidinone core fused with a gamma-lactone, giving a furopyrrolizidine that is connected to a decalin fragment. This is MFS-type transporter ucsD from Acremonium sp.